A 593-amino-acid chain; its full sequence is AT-rich interactive domain-containing protein 3A (593 aa).

The segment at 14-222 is disordered; the sequence is QQRARQELEA…PQLQPPDHGD (209 aa). Residues 41–53 are compositionally biased toward basic and acidic residues; that stretch reads AAPDEDREPESAR. The span at 54-87 shows a compositional bias: low complexity; that stretch reads MQRAQMAALAAMRAAAAGLGHPASPGGSEDGPPG. 3 positions are modified to phosphoserine: Ser77, Ser81, and Ser88. Thr98 carries the phosphothreonine modification. Ser101 and Ser119 each carry phosphoserine. The segment covering 104 to 127 has biased composition (basic and acidic residues); sequence RGREGPGEEHFEDMASDEDMKPKW. The segment at 119–156 is acidic; sequence SDEDMKPKWEEEEMEEDLGEDEEEEEEDYEDEEEEEDE. Acidic residues predominate over residues 128–158; the sequence is EEEEMEEDLGEDEEEEEEDYEDEEEEEDEEG. The ARID domain occupies 238–330; it reads DPKRKEFLDD…YLYPYECEKR (93 aa). Phosphoserine occurs at positions 353 and 362. Glycyl lysine isopeptide (Lys-Gly) (interchain with G-Cter in SUMO2) cross-links involve residues Lys398, Lys399, Lys452, and Lys462. The 98-residue stretch at 444–541 folds into the REKLES domain; it reads AALEQLREKL…GVLFAQPPAP (98 aa). Residues 445-488 form an important for nuclear localization region; sequence ALEQLREKLESAEPPEKKMALVADEQQRLMQRALQQNFLAMAAQ. Positions 490 to 513 are homodimerization; it reads PMSIRINSQASESRQDSAVNLTGT. 2 disordered regions span residues 497–516 and 539–593; these read SQASESRQDSAVNLTGTNGS and PAPT…NSLP. An important for cytoplasmic localization region spans residues 537–557; the sequence is QPPAPTPTSAPNKGGGGGGGS. Residues 549-576 show a composition bias toward gly residues; sequence KGGGGGGGSSSNAGGRGGNTGTSGGQAG. Residues 580–593 are compositionally biased toward low complexity; the sequence is LSTPSTSTSNNSLP.

Homodimer. Heterodimer with ARID3B. Interacts with E2F1. Interacts with GTF2I and BTK. Widely expressed, with highest expression in skeletal muscle, thalamus, and colon.

It localises to the nucleus. The protein localises to the cytoplasm. Functionally, transcription factor which may be involved in the control of cell cycle progression by the RB1/E2F1 pathway and in B-cell differentiation. In Homo sapiens (Human), this protein is AT-rich interactive domain-containing protein 3A (ARID3A).